A 291-amino-acid polypeptide reads, in one-letter code: Sulfotransferase 1A1 (291 aa).

Position 44–49 (44–49 (KSGTNW)) interacts with 3'-phosphoadenylyl sulfate. 102-104 (KTH) serves as a coordination point for substrate. H104 acts as the Proton acceptor in catalysis. Residues R126, S134, Y189, 223-228 (TSFKKM), and 251-255 (FMRKG) contribute to the 3'-phosphoadenylyl sulfate site. Residue S134 is modified to Phosphoserine.

This sequence belongs to the sulfotransferase 1 family. In terms of assembly, homodimer. As to expression, expressed in brain, colon, liver, and small intestine of mice colonized with B.ovatus and L.plantarum.

The protein localises to the cytoplasm. It carries out the reaction a phenol + 3'-phosphoadenylyl sulfate = an aryl sulfate + adenosine 3',5'-bisphosphate + H(+). The catalysed reaction is 17beta-estradiol + 3'-phosphoadenylyl sulfate = 17beta-estradiol 3-sulfate + adenosine 3',5'-bisphosphate + H(+). It catalyses the reaction 4-ethylphenol + 3'-phosphoadenylyl sulfate = 4-ethylphenyl sulfate + adenosine 3',5'-bisphosphate + H(+). The enzyme catalyses 4-nitrophenol + 3'-phosphoadenylyl sulfate = 4-nitrophenyl sulfate + adenosine 3',5'-bisphosphate. It carries out the reaction dopamine + 3'-phosphoadenylyl sulfate = dopamine 3-O-sulfate + adenosine 3',5'-bisphosphate + H(+). The catalysed reaction is dopamine + 3'-phosphoadenylyl sulfate = dopamine 4-O-sulfate + adenosine 3',5'-bisphosphate + H(+). It catalyses the reaction 3,3',5-triiodo-L-thyronine + 3'-phosphoadenylyl sulfate = 3,3',5-triiodo-L-thyronine sulfate + adenosine 3',5'-bisphosphate + H(+). The enzyme catalyses 3,3',5'-triiodo-L-thyronine + 3'-phosphoadenylyl sulfate = 3,3',5'-triiodo-L-thyronine sulfate + adenosine 3',5'-bisphosphate + H(+). It carries out the reaction 3,3'-diiodo-L-thyronine + 3'-phosphoadenylyl sulfate = 3,3'-diiodo-L-thyronine sulfate + adenosine 3',5'-bisphosphate + H(+). The catalysed reaction is L-thyroxine + 3'-phosphoadenylyl sulfate = L-thyroxine sulfate + adenosine 3',5'-bisphosphate + H(+). Sulfotransferase that utilizes 3'-phospho-5'-adenylyl sulfate (PAPS) as sulfonate donor to catalyze the sulfate conjugation of a wide variety of acceptor molecules bearing a hydroxyl or an amine group. Sulfonation increases the water solubility of most compounds, and therefore their renal excretion, but it can also result in bioactivation to form active metabolites. Displays broad substrate specificity for small phenolic compounds. Plays an important role in the sulfonation of endogenous molecules such as steroid hormones. Mediates also the metabolic activation of carcinogenic N-hydroxyarylamines leading to highly reactive intermediates capable of forming DNA adducts, potentially resulting in mutagenesis. May play a role in gut microbiota-host metabolic interaction. O-sulfonates 4-ethylphenol (4-EP), a dietary tyrosine-derived metabolite produced by gut bacteria. The product 4-EPS crosses the blood-brain barrier and may negatively regulate oligodendrocyte maturation and myelination, affecting the functional connectivity of different brain regions associated with the limbic system. Catalyzes the sulfate conjugation of dopamine. Catalyzes the sulfation of T4 (L-thyroxine/3,5,3',5'-tetraiodothyronine), T3 (3,5,3'-triiodothyronine), rT3 (3,3',5'-triiodothyronine) and 3,3'-T2 (3,3'-diiodothyronine), with a substrate preference of 3,3'-T2 &gt; rT3 &gt; T3 &gt; T4. This Mus musculus (Mouse) protein is Sulfotransferase 1A1 (Sult1a1).